The chain runs to 684 residues: DNA-directed RNA polymerase subunit beta' (684 aa).

Positions 69, 71, 87, and 90 each coordinate Zn(2+). The Mg(2+) site is built by aspartate 489, aspartate 491, and aspartate 493.

The protein belongs to the RNA polymerase beta' chain family. RpoC1 subfamily. In terms of assembly, in plastids the minimal PEP RNA polymerase catalytic core is composed of four subunits: alpha, beta, beta', and beta''. When a (nuclear-encoded) sigma factor is associated with the core the holoenzyme is formed, which can initiate transcription. The cofactor is Mg(2+). It depends on Zn(2+) as a cofactor.

The protein localises to the plastid. It is found in the chloroplast. The catalysed reaction is RNA(n) + a ribonucleoside 5'-triphosphate = RNA(n+1) + diphosphate. DNA-dependent RNA polymerase catalyzes the transcription of DNA into RNA using the four ribonucleoside triphosphates as substrates. This chain is DNA-directed RNA polymerase subunit beta', found in Marchantia polymorpha (Common liverwort).